The primary structure comprises 288 residues: Sulfur carrier protein FdhD (288 aa).

C122 (cysteine persulfide intermediate) is an active-site residue. Residue 268–273 (FVRGER) coordinates Mo-bis(molybdopterin guanine dinucleotide).

It belongs to the FdhD family.

It is found in the cytoplasm. Required for formate dehydrogenase (FDH) activity. Acts as a sulfur carrier protein that transfers sulfur from IscS to the molybdenum cofactor prior to its insertion into FDH. This is Sulfur carrier protein FdhD from Anaeromyxobacter sp. (strain K).